We begin with the raw amino-acid sequence, 423 residues long: Imidazolonepropionase (423 aa).

2 residues coordinate Fe(3+): His-78 and His-80. His-78 and His-80 together coordinate Zn(2+). 3 residues coordinate 4-imidazolone-5-propanoate: Arg-87, Tyr-150, and His-183. Residue Tyr-150 coordinates N-formimidoyl-L-glutamate. His-247 is a binding site for Fe(3+). His-247 provides a ligand contact to Zn(2+). Position 250 (Glu-250) interacts with 4-imidazolone-5-propanoate. Asp-322 lines the Fe(3+) pocket. Asp-322 contacts Zn(2+). The N-formimidoyl-L-glutamate site is built by Asn-324 and Gly-326. Ser-327 lines the 4-imidazolone-5-propanoate pocket.

This sequence belongs to the metallo-dependent hydrolases superfamily. HutI family. The cofactor is Zn(2+). Fe(3+) is required as a cofactor.

It localises to the cytoplasm. The enzyme catalyses 4-imidazolone-5-propanoate + H2O = N-formimidoyl-L-glutamate. It functions in the pathway amino-acid degradation; L-histidine degradation into L-glutamate; N-formimidoyl-L-glutamate from L-histidine: step 3/3. Functionally, catalyzes the hydrolytic cleavage of the carbon-nitrogen bond in imidazolone-5-propanoate to yield N-formimidoyl-L-glutamate. It is the third step in the universal histidine degradation pathway. This is Imidazolonepropionase from Bacillus anthracis (strain A0248).